Reading from the N-terminus, the 338-residue chain is Lumican (338 aa).

A signal peptide spans 1–18; sequence MNVCAFSLALALVGSVSG. Glutamine 19 bears the Pyrrolidone carboxylic acid mark. Sulfotyrosine occurs at positions 20, 21, 23, and 30. The LRRNT domain occupies 28 to 66; the sequence is FMYGQISPNCAPECNCPHSYPTAMYCDDLKLKSVPMVPP. LRR repeat units lie at residues 67–88, 91–114, 117–137, 138–159, 160–181, 185–205, 206–227, and 230–250; these read GIKYLYLRNNQIDHIDEKAFEN, DLQWLILDHNLLENSKIKGKVFSK, QLKKLHINYNNLTESVGPLPK, SLQDLQLTNNKISKLGSFDGLV, NLTFIYLQHNQLKEDAVSASLK, SLEYLDLSFNQMSKLPAGLPT, SLLTLYLDNNKISNIPDEYFKR, and GLQYLRLSHNELADSGVPGNS. The N-linked (GlcNAc...) (keratan sulfate) asparagine glycan is linked to asparagine 88. Asparagine 127 is a glycosylation site (N-linked (GlcNAc...) (keratan sulfate) asparagine). Asparagine 160 carries N-linked (GlcNAc...) (keratan sulfate) asparagine glycosylation. The N-linked (GlcNAc...) (keratan sulfate) asparagine glycan is linked to asparagine 252. LRR repeat units follow at residues 255–276 and 277–296; these read SLLELDLSYNKLKSIPTVNENL and ENYYLEVNELEKFDVKSFCK. The cysteines at positions 295 and 328 are disulfide-linked. Serine 304 bears the Phosphoserine mark. The LRR 11 repeat unit spans residues 305 to 326; sequence KIKHLRLDGNPLTQSSLPPDMY.

It belongs to the small leucine-rich proteoglycan (SLRP) family. SLRP class II subfamily. As to quaternary structure, binds to laminin. Contains keratan sulfate. Post-translationally, cys-37, Cys-41, Cys-43 and Cys-53 are involved in disulfide bonds. As to expression, cornea and other tissues.

The protein localises to the secreted. It is found in the extracellular space. Its subcellular location is the extracellular matrix. The sequence is that of Lumican (Lum) from Mus musculus (Mouse).